A 298-amino-acid chain; its full sequence is Zinc finger protein-like 1 homolog (298 aa).

The B box-type; degenerate zinc finger occupies 1-43; sequence MGLCKCPKRLVTNQFCFEHRVNVCEHCMVQSHPKCIVQSYLQW. The segment at 53–101 adopts an RING-type; atypical zinc-finger fold; it reads CTLCGTTLEQGDCVRLVCYHVFHWDCLNARQAALPANTAPRGHQCPACT. Positions 199–230 are disordered; the sequence is AGDYASSRRPLLPRQSPIGGTDRDDNKYQRRT. Serine 214 is modified (phosphoserine). Residues 255 to 275 traverse the membrane as a helical segment; the sequence is WFLVTAGILAFVLFVYLMAWL.

Belongs to the ZFPL1 family.

It localises to the membrane. This is Zinc finger protein-like 1 homolog from Drosophila erecta (Fruit fly).